The sequence spans 1004 residues: Sodium/potassium-transporting ATPase subunit alpha-B (1004 aa).

2 helical membrane-spanning segments follow: residues 76-96 (LFGGFALLLWTGAILCFLAYG) and 110-126 (NLYLGIVLATVVIVTGI). Residues 197–216 (SSLTGESEPQARSPEFTNDN) form a disordered region. 2 consecutive transmembrane segments (helical) span residues 272–294 (FIHIITGVAVFLGVTFFIIAFVL) and 301–329 (AVVFLIGIIVANVPEGLLATVTVCLTLTA). Catalysis depends on D357, which acts as the 4-aspartylphosphate intermediate. K489 contacts ATP. The Mg(2+) site is built by D698 and D702. The next 4 membrane-spanning stretches (helical) occupy residues 768–791 (ISPFLLFILFDIPLPLGTVTILCI), 828–855 (ERLISLAYGQIGMIQASAGFFVYFVIMA), 897–918 (SSCHTAYFVSIVIVQWADLIIS), and 934–959 (ILNFALVFETCLAAFLSYTPGMDKGL).

This sequence belongs to the cation transport ATPase (P-type) (TC 3.A.3) family. Type IIC subfamily. In terms of assembly, the sodium/potassium-transporting ATPase is composed of a catalytic alpha subunit, an auxiliary non-catalytic beta subunit and an additional regulatory subunit.

It localises to the cell membrane. It carries out the reaction K(+)(out) + Na(+)(in) + ATP + H2O = K(+)(in) + Na(+)(out) + ADP + phosphate + H(+). Functionally, this is the catalytic component of the active enzyme, which catalyzes the hydrolysis of ATP coupled with the exchange of sodium and potassium ions across the plasma membrane. This action creates the electrochemical gradient of sodium and potassium ions, providing the energy for active transport of various nutrients. The chain is Sodium/potassium-transporting ATPase subunit alpha-B from Artemia franciscana (Brine shrimp).